Reading from the N-terminus, the 101-residue chain is MNIAEFHQNIEQVWQKIEEELENQGADVDCETQGSVFTITFDNRTQIVINKQEPLLELWIASKLGGFHFAFKNGDWVSNDGQRFWDCFVEACAAHGENVQF.

It belongs to the frataxin family.

Functionally, involved in iron-sulfur (Fe-S) cluster assembly. May act as a regulator of Fe-S biogenesis. The protein is Iron-sulfur cluster assembly protein CyaY of Haemophilus influenzae (strain 86-028NP).